We begin with the raw amino-acid sequence, 214 residues long: Probable transaldolase (214 aa).

The active-site Schiff-base intermediate with substrate is K83.

Belongs to the transaldolase family. Type 3B subfamily.

The protein resides in the cytoplasm. The catalysed reaction is D-sedoheptulose 7-phosphate + D-glyceraldehyde 3-phosphate = D-erythrose 4-phosphate + beta-D-fructose 6-phosphate. Its pathway is carbohydrate degradation; pentose phosphate pathway; D-glyceraldehyde 3-phosphate and beta-D-fructose 6-phosphate from D-ribose 5-phosphate and D-xylulose 5-phosphate (non-oxidative stage): step 2/3. Its function is as follows. Transaldolase is important for the balance of metabolites in the pentose-phosphate pathway. The sequence is that of Probable transaldolase from Desulfosudis oleivorans (strain DSM 6200 / JCM 39069 / Hxd3) (Desulfococcus oleovorans).